Consider the following 144-residue polypeptide: MGKKAHGGKMKPEIDENGTLLVPPPRTIANQDHFHRLNYLYQISAYQTRARQKARTDAHTPLARNYIKSMDLISKKTKTSLLPTIKRTICKKCHRLLWTPKKLEITSDGALSVMCGCGTVKRFNIGADPNYRTYSEREGNLLNS.

Residues 1–22 (MGKKAHGGKMKPEIDENGTLLV) are disordered. Cys90, Cys93, Cys115, and Cys117 together coordinate Zn(2+).

Belongs to the eukaryotic/archaeal RNase P protein component 4 family. In terms of assembly, component of nuclear RNase P. RNase P consists of an RNA moiety and at least 9 protein subunits including POP1, POP3, POP4, POP5, POP6, POP7, POP8, RPP1 and RPR2, many of which are shared with the RNase MPR complex. Requires Zn(2+) as cofactor.

The protein resides in the nucleus. It catalyses the reaction Endonucleolytic cleavage of RNA, removing 5'-extranucleotides from tRNA precursor.. Its function is as follows. Component of ribonuclease P, a protein complex that generates mature tRNA molecules by cleaving their 5'-ends. The chain is Ribonuclease P protein subunit RPR2 (RPR2) from Saccharomyces cerevisiae (strain ATCC 204508 / S288c) (Baker's yeast).